We begin with the raw amino-acid sequence, 218 residues long: Small ribosomal subunit protein uS3 (218 aa).

Residues 38–106 (IRTFLKKKLY…KLVVDIKEVK (69 aa)) enclose the KH type-2 domain.

The protein belongs to the universal ribosomal protein uS3 family. Part of the 30S ribosomal subunit. Forms a tight complex with proteins S10 and S14.

In terms of biological role, binds the lower part of the 30S subunit head. Binds mRNA in the 70S ribosome, positioning it for translation. This Agathobacter rectalis (strain ATCC 33656 / DSM 3377 / JCM 17463 / KCTC 5835 / VPI 0990) (Eubacterium rectale) protein is Small ribosomal subunit protein uS3.